The sequence spans 147 residues: S-protein homolog 10 (147 aa).

Residues 1 to 20 form the signal peptide; that stretch reads MNCFSYFFLVIILCAGLNNA.

The protein belongs to the plant self-incompatibility (S1) protein family.

The protein localises to the secreted. This is S-protein homolog 10 from Arabidopsis thaliana (Mouse-ear cress).